The sequence spans 600 residues: MTKLTRFSVAPLHAMTRRLADVASGRVAPEFVITGARVLSTYSERILPNRELWITGGRVAAVKPAGAHKALGGGFAIYDAADGIIAPGLVDPHIHIESSMVTACAYAEAALLNGTTTIFCDSHEIGNVMDVAGVEAMLEDARQAPLSIFLTVPSTVPATSAALETAGGDLTPDKIADLFDRWPEAVALGEKMDFVPVCMGDERSHAILAAALQRGRPVSGHVYGREFVAAYAASGVTDTHEAIDRDIADDLLDAGVWIFLRGGPPTTPWHSLPQAIRTITELGASHKRTAVCTDDRDADDLMLFGLDWVVREAVKAGMSPEQAWSMGSLHGATRFAMDGEIGGLGGGRRADLVLLDDGLKPQSTWYGGELVVENGKITPRLDQALSQRYQYPKAAYATVKLPAQVKLTPELPTKACTVNAIKTALPGITLIHDKVAIAPASDWPTLFARHGLCFVAVIERHGKSAGNVAHGLLKDFGLTRGAVASSVGHDSHNIIVAGTNEADMQVAVAAIGSHQGGVCVVADGKVRAMVPLPIAGLLSDKRITEVAEEVKLLKTEWAAAGCTIPYMGFNLIPLSVIPEIRITDKGLVLVPQMELTPLFE.

This sequence belongs to the metallo-dependent hydrolases superfamily. Adenine deaminase family. The cofactor is Mn(2+).

It catalyses the reaction adenine + H2O + H(+) = hypoxanthine + NH4(+). This Bradyrhizobium sp. (strain BTAi1 / ATCC BAA-1182) protein is Adenine deaminase.